The primary structure comprises 407 residues: uncharacterized protein (407 aa).

2 disordered regions span residues 1 to 62 (MTGR…NGDP) and 350 to 379 (SVTP…KPSS). Residues 17–30 (PVEKMPRFQREHGA) are compositionally biased toward basic and acidic residues.

This is an uncharacterized protein from Ictaluridae (bullhead catfishes).